The following is a 109-amino-acid chain: UPF0060 membrane protein PA3275 (109 aa).

Helical transmembrane passes span phenylalanine 5–leucine 25, leucine 27–leucine 47, alanine 59–glutamate 79, and leucine 84–glycine 104.

The protein belongs to the UPF0060 family.

It is found in the cell inner membrane. This chain is UPF0060 membrane protein PA3275, found in Pseudomonas aeruginosa (strain ATCC 15692 / DSM 22644 / CIP 104116 / JCM 14847 / LMG 12228 / 1C / PRS 101 / PAO1).